The primary structure comprises 789 residues: MLSSANRFYIKRHLATHANMFPSVSKNFQTKVPPYAKLLTNLDKIKQITNNAPLTLAEKILYSHLCDPEESITSSDLSTIRGNKYLKLNPDRVAMQDASAQMALLQFMTTGLNQTSVPASIHCDHLIVGKDGETKDLPSSIATNQEVFDFLESCAKRYGIQFWGPGSGIIHQIVLENFSAPGLMMLGTDSHTPNAGGLGAIAIGVGGADAVDALTGTPWELKAPKILGVKLTGKLNGWSTPKDVITKLAGLLTVRGGTGYIVEYFGEGVSTLSCTGMATICNMGAEIGATTSTFPYQEAHKRYLQATNRAEVAEAADVALNKFNFLRADKDAQYDKVIEIDLSAIEPHVNGPFTPDLSTPISQYAEKSLKENWPQKVSAGLIGSCTNSSYQDMSRVVDLVKQASKAGLKPRIPFFVTPGSEQIRATLERDGIIDIFQENGAKVLANACGPCIGQWNREDVSKTSKETNTIFTSFNRNFRARNDGNRNTMNFLTSPEIVTAMSYSGDAQFNPLTDSIKLPNGKDFKFQPPKGDELPKRGFEHGRDKFYPEMDPKPDSNVEIKVDPNSDRLQLLEPFKPWNGKELKTNVLLKVEGKCTTDHISAAGVWLKYKGHLENISYNTLIGAQNKETGEVNKAYDLDGTEYDIPGLMMKWKSDGRPWTVIAEHNYGEGSAREHAALSPRFLGGEILLVKSFARIHETNLKKQGVLPLTFANESDYDKISSGDVLETLNLVDMIAKDGNNGGEIDVKITKPNGESFTIKAKHTMSKDQIDFFKAGSAINYIGNIRRNE.

The transit peptide at 1-14 (MLSSANRFYIKRHL) directs the protein to the mitochondrion. Substrate contacts are provided by residues Gln-96 and 189-191 (DSH). [4Fe-4S] cluster is bound by residues Cys-385, Cys-448, and Cys-451. Substrate-binding positions include Arg-476, Arg-481, Lys-610, and 672 to 673 (AR).

This sequence belongs to the aconitase/IPM isomerase family. [4Fe-4S] cluster is required as a cofactor.

It is found in the mitochondrion. It catalyses the reaction (2R)-homocitrate = cis-homoaconitate + H2O. The protein operates within amino-acid biosynthesis; L-lysine biosynthesis via AAA pathway; L-alpha-aminoadipate from 2-oxoglutarate: step 2/5. Catalyzes the reversible dehydration of (R)-homocitrate to cis-homoaconitate, a step in the alpha-aminoadipate pathway for lysine biosynthesis. The protein is Homocitrate dehydratase, mitochondrial (ACO2) of Saccharomyces cerevisiae (strain ATCC 204508 / S288c) (Baker's yeast).